A 1167-amino-acid polypeptide reads, in one-letter code: RNA-directed RNA polymerase (1167 aa).

The 183-residue stretch at 553–735 (LTYGILAEAT…KALASYTGLE (183 aa)) folds into the RdRp catalytic domain.

The protein belongs to the reoviridae RNA-directed RNA polymerase family. As to quaternary structure, interacts with VP3 (Potential). Interacts with VP2 (Potential). Interacts with NSP5; this interaction is probably necessary for the formation of functional virus factories.

The protein localises to the virion. It carries out the reaction RNA(n) + a ribonucleoside 5'-triphosphate = RNA(n+1) + diphosphate. Functionally, RNA-directed RNA polymerase that is involved in both transcription and genome replication. Together with VP3 capping enzyme, forms an enzyme complex positioned near the channels situated at each of the five-fold vertices of the core. Following infection, the outermost layer of the virus is lost, leaving a double-layered particle (DLP) made up of the core and VP6 shell. VP1 then catalyzes the transcription of fully conservative plus-strand genomic RNAs that are extruded through the DLP's channels into the cytoplasm where they function as mRNAs for translation of viral proteins. One copy of each of the viral (+)RNAs is also recruited during core assembly, together with newly synthesized polymerase complexes and VP2. The polymerase of these novo-formed particles catalyzes the synthesis of complementary minus-strands leading to dsDNA formation. To do so, the polymerase specifically recognizes conserved 3' sequence(s) in plus-strand RNA templates. Once dsRNA synthesis is complete, the polymerase switches to the transcriptional mode, thus providing secondary transcription. This chain is RNA-directed RNA polymerase, found in Rotavirus X (isolate RVX/Human/Bangladesh/NADRV-B219/2002/GXP[X]) (RV ADRV-N).